The following is a 1192-amino-acid chain: Reticulon-4 (1192 aa).

Met1 bears the N-acetylmethionine mark. Residues 1 to 204 form a disordered region; that stretch reads MEDLDQSPLV…ASEPVIRSSA (204 aa). Residues 1-1018 lie on the Cytoplasmic side of the membrane; it reads MEDLDQSPLV…LYWRDIKKTG (1018 aa). Phosphoserine is present on residues Ser7 and Ser15. Residues 31-53 are compositionally biased toward acidic residues; sequence PEDEEEEEEEEEEDEDEDLEELE. A compositionally biased stretch (low complexity) spans 65–77; sequence AAPVPTAPAAGAP. Over residues 87 to 101 the composition is skewed to pro residues; sequence PPAPRGPLPAAPPVA. Position 107 is a phosphoserine (Ser107). Residues 110 to 132 show a composition bias toward low complexity; sequence PSPVSSTVPAPSPLSAAAVSPSK. Positions 141–150 are enriched in pro residues; that stretch reads ARPPPPPPAS. Phosphoserine is present on Ser152. Pro residues predominate over residues 159 to 173; it reads WTPPAPAPAAPPSTP. Phosphoserine is present on residues Ser181, Ser182, Ser184, Ser361, and Ser446. Residues 427–458 are disordered; sequence DSLEQTNHEKDSESSNDDTSFPSTPEGIKDRS. Thr450 is modified (phosphothreonine). The residue at position 511 (Ser511) is a Phosphoserine. The segment covering 722 to 734 has biased composition (basic and acidic residues); it reads AKVEQPVPDHSEL. A disordered region spans residues 722-762; the sequence is AKVEQPVPDHSELVEDSSPDSEPVDLFSDDSIPDVPQKQDE. A compositionally biased stretch (acidic residues) spans 735–753; it reads VEDSSPDSEPVDLFSDDSI. Ser749 is subject to Phosphoserine. The residue at position 858 (Thr858) is a Phosphothreonine. Phosphoserine occurs at positions 881 and 991. Residues 1005-1192 enclose the Reticulon domain; that stretch reads VVDLLYWRDI…KIPGLKRKAE (188 aa). Residues 1019 to 1039 form a helical membrane-spanning segment; it reads VVFGASLFLLLSLTVFSIVSV. Residues 1040 to 1133 lie on the Lumenal side of the membrane; sequence TAYIALALLS…LMWVFTYVGA (94 aa). Position 1104 is an N6-acetyllysine (Lys1104). A helical membrane pass occupies residues 1134–1154; it reads LFNGLTLLILALISLFSVPVI. Residues 1155–1192 are Cytoplasmic-facing; that stretch reads YERHQAQIDHYLGLANKNVKDAMAKIQAKIPGLKRKAE.

Binds to RTN4R. Interacts with ATL1. Interacts with TMEM170A. Interacts with RTN4IP1. In terms of assembly, interacts in trans with CNTNAP1. Interacts with REEP5. Interacts with synaptic plasticity regulator PANTS; the interaction results in enhanced RTN4-mediated inhibition of AMPA receptor clustering. Interacts with GPR50. As to quaternary structure, homodimer. Interacts with BAD/Bcl-xl and BCL2. Interact with RTN3. Interacts with NGBR. Interacts with SPTLC1. Interacts with GRAMD4. Interacts with CDH5. Interacts with BACE1 and BACE2. Interacts with REEP5. Interacts with RETREG3. Interacts with BACE1 and BACE2. Interacts with TMEM33. As to expression, isoform A: is specifically expressed in brain and testis and weakly in heart and skeletal muscle. Isoform B: widely expressed except for the liver. Highly expressed in endothelial cells and vascular smooth muscle cells, including blood vessels and mesenteric arteries. Isoform C: is expressed in brain, skeletal muscle and adipocytes. Isoform D is testis-specific.

Its subcellular location is the endoplasmic reticulum membrane. The protein resides in the cell membrane. The protein localises to the synapse. It is found in the cell junction. Its function is as follows. Required to induce the formation and stabilization of endoplasmic reticulum (ER) tubules. They regulate membrane morphogenesis in the ER by promoting tubular ER production. They influence nuclear envelope expansion, nuclear pore complex formation and proper localization of inner nuclear membrane proteins. However each isoform have specific functions mainly depending on their tissue expression specificities. Functionally, developmental neurite growth regulatory factor with a role as a negative regulator of axon-axon adhesion and growth, and as a facilitator of neurite branching. Regulates neurite fasciculation, branching and extension in the developing nervous system. Involved in down-regulation of growth, stabilization of wiring and restriction of plasticity in the adult CNS. Regulates the radial migration of cortical neurons via an RTN4R-LINGO1 containing receptor complex. Acts as a negative regulator of central nervous system angiogenesis. Inhibits spreading, migration and sprouting of primary brain microvascular endothelial cells (MVECs). Also induces the retraction of MVECs lamellipodia and filopodia in a ROCK pathway-dependent manner. In terms of biological role, mainly function in endothelial cells and vascular smooth muscle cells, is also involved in immune system regulation. Modulator of vascular remodeling, promotes the migration of endothelial cells but inhibits the migration of vascular smooth muscle cells. Regulates endothelial sphingolipid biosynthesis with direct effects on vascular function and blood pressure. Inhibits serine palmitoyltransferase, SPTLC1, the rate-limiting enzyme of the novo sphingolipid biosynthetic pathway, thereby controlling production of endothelial sphingosine-1-phosphate (S1P). Required to promote macrophage homing and functions such as cytokine/chemokine gene expression involved in angiogenesis, arteriogenesis and tissue repair. Mediates ICAM1 induced transendothelial migration of leukocytes such as monocytes and neutrophils and acute inflammation. Necessary for immune responses triggered by nucleic acid sensing TLRs, such as TLR9, is required for proper TLR9 location to endolysosomes. Also involved in immune response to LPS. Plays a role in liver regeneration through the modulation of hepatocytes proliferation. Reduces the anti-apoptotic activity of Bcl-xl and Bcl-2. This is likely consecutive to their change in subcellular location, from the mitochondria to the endoplasmic reticulum, after binding and sequestration. With isoform C, inhibits BACE1 activity and amyloid precursor protein processing. Regulates cardiomyocyte apoptosis upon hypoxic conditions. With isoform B, inhibits BACE1 activity and amyloid precursor protein processing. The sequence is that of Reticulon-4 from Homo sapiens (Human).